A 485-amino-acid chain; its full sequence is MPQLRDSGTRSLHATEPVPSAEMDGFCRIFGVETEYGVAVTGAERPVDAGQVAMTMFQPIVSRSRSTNTYLANGSRLYLDVGSHPEYATAEARDPREALGQDLAGEHVMRNLALKAQRKLRESYSEHATIHVFKNNVDSAGHAFGCHENYLVRRFVPLETIEHQLLPFLITRQLYTGAGRMTPDGFQITQRADFLDEAVSSATTRSRPMVNTRDEPHADPDSFRRLHVIIGDSNRSQWSTWMKLAVTHLVLCAIEDAFRLGTPSGFEHCAFADPAAANRTVSRFLDDPHAELTLESGESVSALGLQRRYYAAVKAFIETHGDALASSLPATTIVTIMGEWSRVLDALERGAYDALADRVDWAAKKRLFDALKRRRPDVTFAQMEQLELDYHDIANGRLYGSLTSRNQMRELLTGDDVEYAVHNPPTDTRAALRGRFVDAALNVGAQFSADWTHLTLTAPERREAILLDPFEAEPTPEFEQLMEAL.

Glutamate 33 provides a ligand contact to Mg(2+). Arginine 76 provides a ligand contact to ATP. Tyrosine 78 serves as a coordination point for Mg(2+). Aspartate 80 serves as the catalytic Proton acceptor. Glutamate 86 lines the Mg(2+) pocket. Positions 89 and 451 each coordinate ATP.

Belongs to the Pup ligase/Pup deamidase family. Pup-conjugating enzyme subfamily.

It carries out the reaction ATP + [prokaryotic ubiquitin-like protein]-L-glutamate + [protein]-L-lysine = ADP + phosphate + N(6)-([prokaryotic ubiquitin-like protein]-gamma-L-glutamyl)-[protein]-L-lysine.. It participates in protein degradation; proteasomal Pup-dependent pathway. It functions in the pathway protein modification; protein pupylation. Functionally, catalyzes the covalent attachment of the prokaryotic ubiquitin-like protein modifier Pup to the proteasomal substrate proteins, thereby targeting them for proteasomal degradation. This tagging system is termed pupylation. The ligation reaction involves the side-chain carboxylate of the C-terminal glutamate of Pup and the side-chain amino group of a substrate lysine. The sequence is that of Pup--protein ligase from Bifidobacterium longum subsp. infantis (strain ATCC 15697 / DSM 20088 / JCM 1222 / NCTC 11817 / S12).